A 289-amino-acid polypeptide reads, in one-letter code: ATP phosphoribosyltransferase (289 aa).

Belongs to the ATP phosphoribosyltransferase family. Long subfamily. The cofactor is Mg(2+).

The protein localises to the cytoplasm. It catalyses the reaction 1-(5-phospho-beta-D-ribosyl)-ATP + diphosphate = 5-phospho-alpha-D-ribose 1-diphosphate + ATP. It functions in the pathway amino-acid biosynthesis; L-histidine biosynthesis; L-histidine from 5-phospho-alpha-D-ribose 1-diphosphate: step 1/9. Feedback inhibited by histidine. Functionally, catalyzes the condensation of ATP and 5-phosphoribose 1-diphosphate to form N'-(5'-phosphoribosyl)-ATP (PR-ATP). Has a crucial role in the pathway because the rate of histidine biosynthesis seems to be controlled primarily by regulation of HisG enzymatic activity. The chain is ATP phosphoribosyltransferase from Pelotomaculum thermopropionicum (strain DSM 13744 / JCM 10971 / SI).